Reading from the N-terminus, the 621-residue chain is Uptake hydrogenase large subunit (621 aa).

Ni(2+) contacts are provided by Cys-75, Cys-78, Cys-600, and Cys-603.

It belongs to the [NiFe]/[NiFeSe] hydrogenase large subunit family. As to quaternary structure, heterodimer of a large and a small subunit. Requires Ni(2+) as cofactor.

It localises to the cell membrane. The catalysed reaction is H2 + A = AH2. In terms of biological role, this enzyme recycles the H(2) produced by nitrogenase to increase the production of ATP and to protect nitrogenase against inhibition or damage by O(2) under carbon- or phosphate-limited conditions. The chain is Uptake hydrogenase large subunit (hupL) from Alcaligenes hydrogenophilus.